A 499-amino-acid chain; its full sequence is Maturase K (499 aa).

The protein belongs to the intron maturase 2 family. MatK subfamily.

The protein localises to the plastid. It localises to the chloroplast. In terms of biological role, usually encoded in the trnK tRNA gene intron. Probably assists in splicing its own and other chloroplast group II introns. The protein is Maturase K of Neltuma juliflora (Mesquite).